Reading from the N-terminus, the 351-residue chain is uncharacterized protein (351 aa).

Mn(2+) is bound by residues D215, D226, H290, E319, and E333.

Belongs to the peptidase M24B family. Requires Mn(2+) as cofactor.

This is an uncharacterized protein from Staphylococcus aureus (strain MRSA252).